The primary structure comprises 123 residues: S-adenosylmethionine decarboxylase proenzyme 2 (123 aa).

The Schiff-base intermediate with substrate; via pyruvic acid role is filled by S65. S65 bears the Pyruvic acid (Ser); by autocatalysis mark. The active-site Proton acceptor; for processing activity is the H70. The Proton donor; for catalytic activity role is filled by C85.

The protein belongs to the prokaryotic AdoMetDC family. Type 1 subfamily. As to quaternary structure, heterotetramer of two alpha and two beta chains arranged as a dimer of alpha/beta heterodimers. Pyruvate serves as cofactor. Is synthesized initially as an inactive proenzyme. Formation of the active enzyme involves a self-maturation process in which the active site pyruvoyl group is generated from an internal serine residue via an autocatalytic post-translational modification. Two non-identical subunits are generated from the proenzyme in this reaction, and the pyruvate is formed at the N-terminus of the alpha chain, which is derived from the carboxyl end of the proenzyme. The post-translation cleavage follows an unusual pathway, termed non-hydrolytic serinolysis, in which the side chain hydroxyl group of the serine supplies its oxygen atom to form the C-terminus of the beta chain, while the remainder of the serine residue undergoes an oxidative deamination to produce ammonia and the pyruvoyl group blocking the N-terminus of the alpha chain.

It carries out the reaction S-adenosyl-L-methionine + H(+) = S-adenosyl 3-(methylsulfanyl)propylamine + CO2. The protein operates within amine and polyamine biosynthesis; S-adenosylmethioninamine biosynthesis; S-adenosylmethioninamine from S-adenosyl-L-methionine: step 1/1. Its function is as follows. Catalyzes the decarboxylation of S-adenosylmethionine to S-adenosylmethioninamine (dcAdoMet), the propylamine donor required for the synthesis of the polyamines spermine and spermidine from the diamine putrescine. This is S-adenosylmethionine decarboxylase proenzyme 2 from Bacillus cereus (strain ATCC 14579 / DSM 31 / CCUG 7414 / JCM 2152 / NBRC 15305 / NCIMB 9373 / NCTC 2599 / NRRL B-3711).